A 439-amino-acid chain; its full sequence is Ornithine aminotransferase, mitochondrial (439 aa).

Residues 1 to 25 (MFSKLAHLQRFAVLSRGVHSSVASA) constitute a mitochondrion; in hepatic form transit peptide. The N-terminal 35 residues, 1–35 (MFSKLAHLQRFAVLSRGVHSSVASATSVATKKTVQ), are a transit peptide targeting the mitochondrion; in renal form. An N6-acetyllysine mark is found at K49 and K66. K102 is subject to N6-succinyllysine. At K107 the chain carries N6-acetyllysine; alternate. K107 carries the post-translational modification N6-succinyllysine; alternate. K292 is modified (N6-(pyridoxal phosphate)lysine). The residue at position 362 (K362) is an N6-acetyllysine; alternate. N6-succinyllysine; alternate is present on K362. K386 and K392 each carry N6-acetyllysine. N6-acetyllysine; alternate is present on K405. K405 is modified (N6-succinyllysine; alternate). The residue at position 421 (K421) is an N6-acetyllysine.

It belongs to the class-III pyridoxal-phosphate-dependent aminotransferase family. Homohexamer. The cofactor is pyridoxal 5'-phosphate.

It localises to the mitochondrion matrix. It carries out the reaction L-ornithine + 2-oxoglutarate = L-glutamate 5-semialdehyde + L-glutamate. Its pathway is amino-acid biosynthesis; L-proline biosynthesis; L-glutamate 5-semialdehyde from L-ornithine: step 1/1. Catalyzes the reversible interconversion of L-ornithine and 2-oxoglutarate to L-glutamate semialdehyde and L-glutamate. This chain is Ornithine aminotransferase, mitochondrial (OAT), found in Homo sapiens (Human).